Consider the following 347-residue polypeptide: MSALGAVIALLLWGQLFAVDSGNDVTDIADDGCPKPPEIANGYVEHLVRYQCKKYYRLRTEGDGVYTLNNEKQWTNKAVGDKLPECEAVCGKPKNPANPVQRILGGHLDAKGSFPWQAKMVSRHNLTTGATLINEQWLLTTAKNLFLNHSENATAKDIAPTLTLYVGKNQLVEIEKVVLYPNYSQVDIGLIKLKDKVPVNERVMPICLPSKDYAEVGRVGYVSGWGRNANFKFTDHLKYVMLPVADQYQCVKHYEGSTVPEKKTPKSPVGQQPILNEHTFCAGMSKYQEDTCYGDAGSAFAVHDLEEDTWYAAGILSFDKSCGVAEYGVYVKATSIQDWVQKTIAEN.

An N-terminal signal peptide occupies residues 1–18 (MSALGAVIALLLWGQLFA). A Sushi domain is found at 31–88 (DGCPKPPEIANGYVEHLVRYQCKKYYRLRTEGDGVYTLNNEKQWTNKAVGDKLPECEA). 4 disulfide bridges follow: Cys-52/Cys-86, Cys-90/Cys-207, Cys-250/Cys-281, and Cys-292/Cys-322. The Peptidase S1 domain maps to 103 to 345 (ILGGHLDAKG…IQDWVQKTIA (243 aa)). Residues Asn-125, Asn-148, Asn-152, and Asn-182 are each glycosylated (N-linked (GlcNAc...) asparagine). The interaction with CD163 stretch occupies residues 259–264 (VPEKKT).

The protein belongs to the peptidase S1 family. In terms of assembly, tetramer of two alpha and two beta chains; disulfide-linked. The hemoglobin/haptoglobin complex is composed of a haptoglobin dimer bound to two hemoglobin alpha-beta dimers. Interacts with CD163. Interacts with ERGIC3. As to expression, expressed by the liver and secreted in plasma.

It is found in the secreted. Its function is as follows. As a result of hemolysis, hemoglobin is found to accumulate in the kidney and is secreted in the urine. Haptoglobin captures, and combines with free plasma hemoglobin to allow hepatic recycling of heme iron and to prevent kidney damage. Haptoglobin also acts as an antioxidant, has antibacterial activity and plays a role in modulating many aspects of the acute phase response. Hemoglobin/haptoglobin complexes are rapidly cleared by the macrophage CD163 scavenger receptor expressed on the surface of liver Kupfer cells through an endocytic lysosomal degradation pathway. The sequence is that of Haptoglobin (HP) from Ateles geoffroyi (Black-handed spider monkey).